The following is a 285-amino-acid chain: Acetylglutamate kinase (285 aa).

Substrate contacts are provided by residues 69–70 (GG), Arg-91, and Asn-183.

Belongs to the acetylglutamate kinase family. ArgB subfamily.

Its subcellular location is the cytoplasm. It carries out the reaction N-acetyl-L-glutamate + ATP = N-acetyl-L-glutamyl 5-phosphate + ADP. It functions in the pathway amino-acid biosynthesis; L-arginine biosynthesis; N(2)-acetyl-L-ornithine from L-glutamate: step 2/4. In terms of biological role, catalyzes the ATP-dependent phosphorylation of N-acetyl-L-glutamate. The protein is Acetylglutamate kinase of Jannaschia sp. (strain CCS1).